The chain runs to 179 residues: Sec-independent protein translocase protein TatB (179 aa).

The chain crosses the membrane as a helical span at residues 1–21 (MLDLGLSKMALIGVVALVVLG). A compositionally biased stretch (low complexity) spans 101–115 (GAAGDAGSVGSPGSD). A disordered region spans residues 101-134 (GAAGDAGSVGSPGSDTPAAPSWRGSSAALAPKRR).

The protein belongs to the TatB family. The Tat system comprises two distinct complexes: a TatABC complex, containing multiple copies of TatA, TatB and TatC subunits, and a separate TatA complex, containing only TatA subunits. Substrates initially bind to the TatABC complex, which probably triggers association of the separate TatA complex to form the active translocon.

The protein localises to the cell inner membrane. Part of the twin-arginine translocation (Tat) system that transports large folded proteins containing a characteristic twin-arginine motif in their signal peptide across membranes. Together with TatC, TatB is part of a receptor directly interacting with Tat signal peptides. TatB may form an oligomeric binding site that transiently accommodates folded Tat precursor proteins before their translocation. The polypeptide is Sec-independent protein translocase protein TatB (Burkholderia orbicola (strain AU 1054)).